Here is a 340-residue protein sequence, read N- to C-terminus: Protein RecA (340 aa).

66–73 (GPESSGKT) contacts ATP.

Belongs to the RecA family.

The protein resides in the cytoplasm. Can catalyze the hydrolysis of ATP in the presence of single-stranded DNA, the ATP-dependent uptake of single-stranded DNA by duplex DNA, and the ATP-dependent hybridization of homologous single-stranded DNAs. It interacts with LexA causing its activation and leading to its autocatalytic cleavage. This chain is Protein RecA, found in Rickettsia prowazekii (strain Madrid E).